Reading from the N-terminus, the 733-residue chain is Leucine-rich repeat neuronal protein 4 (733 aa).

An N-terminal signal peptide occupies residues 1-19 (MRWTLMLQLLQLLLQLLMA). The Extracellular segment spans residues 20–676 (QSQSLERISQ…CATFTTKPSS (657 aa)). LRR repeat units follow at residues 62–82 (GVTT…CLPR), 83–106 (TLRS…GRLP), 107–128 (ELRV…RDTL), 130–151 (ELRE…AGPS), 154–175 (SLRS…TFAC), 178–199 (ALRL…AFAG), 207–230 (ALEL…RNLP), 231–253 (KLKS…IFKM), 256–278 (NLRQ…IFQD), and 281–302 (NLQV…NSSQ). Asn-70 carries N-linked (GlcNAc...) asparagine glycosylation. Asn-183 is a glycosylation site (N-linked (GlcNAc...) asparagine). N-linked (GlcNAc...) asparagine glycosylation is found at Asn-291, Asn-299, Asn-327, Asn-408, and Asn-469. In terms of domain architecture, LRRCT spans 311–364 (NPLICSCELAWLLVDVNKTVLHRAADTMCEPALGSTGPFSGPLSLSHLSNVCRS). The tract at residues 395 to 423 (STALSAQPGGSQQNITKVPSLTMTSPTQG) is disordered. Residues 480-518 (KYLEPLPTSPNPRSLPQTKQRTQATPRALHTDPPQDEIP) form a disordered region. A compositionally biased stretch (polar residues) spans 490-504 (NPRSLPQTKQRTQAT). Residues 576–675 (TPDPPTLQGV…SCATFTTKPS (100 aa)) form the Fibronectin type-III domain. A glycan (N-linked (GlcNAc...) asparagine) is linked at Asn-619. A helical membrane pass occupies residues 677–697 (VVIFWGLCTASGLLLVSTLVL). The Cytoplasmic portion of the chain corresponds to 698–733 (SVCLWRQRWKPHRQFYDTHLVAFKNPARAEEVTQWE).

The protein resides in the membrane. Functionally, may play an important role in hippocampus-dependent long-lasting memory. This is Leucine-rich repeat neuronal protein 4 (Lrrn4) from Mus musculus (Mouse).